Consider the following 194-residue polypeptide: Glycerol-3-phosphate acyltransferase (194 aa).

5 helical membrane-spanning segments follow: residues 4–24 (ELIL…LLLA), 80–100 (WVAA…FLGF), 112–132 (VFLG…IGIV), 137–157 (YISL…AAVE), and 161–181 (LLVG…RENI).

The protein belongs to the PlsY family. As to quaternary structure, probably interacts with PlsX.

Its subcellular location is the cell inner membrane. It carries out the reaction an acyl phosphate + sn-glycerol 3-phosphate = a 1-acyl-sn-glycero-3-phosphate + phosphate. Its pathway is lipid metabolism; phospholipid metabolism. Catalyzes the transfer of an acyl group from acyl-phosphate (acyl-PO(4)) to glycerol-3-phosphate (G3P) to form lysophosphatidic acid (LPA). This enzyme utilizes acyl-phosphate as fatty acyl donor, but not acyl-CoA or acyl-ACP. In Geobacter sulfurreducens (strain ATCC 51573 / DSM 12127 / PCA), this protein is Glycerol-3-phosphate acyltransferase.